A 350-amino-acid polypeptide reads, in one-letter code: MMAAGVSRFRGSLLGALLGDCIGAVFEGHTNVTKEFLFDYMKSLDKGERLKRVLTYTDDTAMARSIVQSVLENYEFNIEDLANRFTTEYNRDPDRGYGMAVVHVFEKLGSGEYKHVFSPAREQFDGKGSYGNGAAMRVVGISLAYPRIPDIIEYARTSGMLTHASSLGYNGAILQALAVHYALQGELAPETFLDQLLDHMKEVETDKKSRSDALELEMDEFPYCNKLRKIKAFLAREDVTRKDIVKELGNGIQAFESVPTAIYSFLRCLKPVSELPSELTNLQRTIAFCILLGGDTDTIATMAAAIAGAYHGEEQIPLNWKLSAEGYKDAEDWGEKLHQLYCRRLQSTTS.

Residues E27, T57, D58, and D59 each contribute to the Mg(2+) site. D58 contacts substrate. Substrate is bound by residues 127 to 133 (KGSYGNG), H163, L216, and I252. Mg(2+)-binding residues include D295, D297, and T298.

The protein belongs to the ADP-ribosylglycohydrolase family. As to quaternary structure, monomer. Requires Mg(2+) as cofactor.

Its subcellular location is the nucleus. The protein resides in the cytoplasm. It is found in the chromosome. The protein localises to the mitochondrion matrix. The catalysed reaction is [(1''-&gt;2')-ADP-alpha-D-ribose](n) + H2O = [(1''-&gt;2')-ADP-alpha-D-ribose](n-1) + ADP-D-ribose. It catalyses the reaction 1''-O-acetyl-ADP-alpha-D-ribose + H2O = ADP-D-ribose + acetate + H(+). It carries out the reaction O-(ADP-D-ribosyl)-L-seryl-[protein] + H2O = ADP-D-ribose + L-seryl-[protein]. The enzyme catalyses alpha-NAD(+) + H2O = ADP-D-ribose + nicotinamide + H(+). The protein undergoes a dramatic conformational switch from closed to open states upon substrate-binding, which enables specific substrate recognition for the 1''-O-linkage. The glutamate flap (Glu-27) blocks substrate entrance to Mg(2+) in the unliganded closed state. In presence of substrate, Glu-27 is ejected from the active site: this closed-to-open transition significantly widens the substrate-binding channel and precisely positions the scissile 1''-O-linkage for cleavage while securing tightly 2'- and 3'-hydroxyls of ADP-ribose. Functionally, ADP-ribosylhydrolase that preferentially hydrolyzes the scissile alpha-O-linkage attached to the anomeric C1'' position of ADP-ribose and acts on different substrates, such as proteins ADP-ribosylated on serine and threonine, free poly(ADP-ribose) and O-acetyl-ADP-D-ribose. Specifically acts as a serine mono-ADP-ribosylhydrolase by mediating the removal of mono-ADP-ribose attached to serine residues on proteins, thereby playing a key role in DNA damage response. Serine ADP-ribosylation of proteins constitutes the primary form of ADP-ribosylation of proteins in response to DNA damage. Does not hydrolyze ADP-ribosyl-arginine, -cysteine, -diphthamide, or -asparagine bonds. Also able to degrade protein free poly(ADP-ribose), which is synthesized in response to DNA damage: free poly(ADP-ribose) acts as a potent cell death signal and its degradation by ADPRHL2 protects cells from poly(ADP-ribose)-dependent cell death, a process named parthanatos. Also hydrolyzes free poly(ADP-ribose) in mitochondria. Specifically digests O-acetyl-ADP-D-ribose, a product of deacetylation reactions catalyzed by sirtuins. Specifically degrades 1''-O-acetyl-ADP-D-ribose isomer, rather than 2''-O-acetyl-ADP-D-ribose or 3''-O-acetyl-ADP-D-ribose isomers. This chain is ADP-ribosylhydrolase ARH3 (adprs), found in Xenopus tropicalis (Western clawed frog).